The following is a 353-amino-acid chain: Photosystem II protein D1 (353 aa).

Position 2 is an N-acetylthreonine (threonine 2). Threonine 2 is modified (phosphothreonine). The next 3 helical transmembrane spans lie at 29 to 46 (YIGW…TATS), 118 to 133 (HFLL…EWEL), and 142 to 156 (WIAV…AATA). Histidine 118 is a chlorophyll a binding site. Position 126 (tyrosine 126) interacts with pheophytin a. Residues aspartate 170 and glutamate 189 each coordinate [CaMn4O5] cluster. The helical transmembrane segment at 197–218 (FHMLGVAGVFGGSLFSAMHGSL) threads the bilayer. Residue histidine 198 coordinates chlorophyll a. A quinone contacts are provided by residues histidine 215 and 264-265 (SF). Histidine 215 is a Fe cation binding site. Histidine 272 lines the Fe cation pocket. Residues 274–288 (FLAAWPVAGIWFTAL) form a helical membrane-spanning segment. Residues histidine 332, glutamate 333, aspartate 342, and alanine 344 each coordinate [CaMn4O5] cluster. Residues 345–353 (AVESISIGG) constitute a propeptide that is removed on maturation.

Belongs to the reaction center PufL/M/PsbA/D family. PSII is composed of 1 copy each of membrane proteins PsbA, PsbB, PsbC, PsbD, PsbE, PsbF, PsbH, PsbI, PsbJ, PsbK, PsbL, PsbM, PsbT, PsbX, PsbY, PsbZ, Psb30/Ycf12, at least 3 peripheral proteins of the oxygen-evolving complex and a large number of cofactors. It forms dimeric complexes. The cofactor is The D1/D2 heterodimer binds P680, chlorophylls that are the primary electron donor of PSII, and subsequent electron acceptors. It shares a non-heme iron and each subunit binds pheophytin, quinone, additional chlorophylls, carotenoids and lipids. D1 provides most of the ligands for the Mn4-Ca-O5 cluster of the oxygen-evolving complex (OEC). There is also a Cl(-1) ion associated with D1 and D2, which is required for oxygen evolution. The PSII complex binds additional chlorophylls, carotenoids and specific lipids.. In terms of processing, tyr-161 forms a radical intermediate that is referred to as redox-active TyrZ, YZ or Y-Z. Post-translationally, C-terminally processed by CTPA; processing is essential to allow assembly of the oxygen-evolving complex and thus photosynthetic growth.

Its subcellular location is the plastid. It is found in the chloroplast thylakoid membrane. It carries out the reaction 2 a plastoquinone + 4 hnu + 2 H2O = 2 a plastoquinol + O2. Its function is as follows. Photosystem II (PSII) is a light-driven water:plastoquinone oxidoreductase that uses light energy to abstract electrons from H(2)O, generating O(2) and a proton gradient subsequently used for ATP formation. It consists of a core antenna complex that captures photons, and an electron transfer chain that converts photonic excitation into a charge separation. The D1/D2 (PsbA/PsbD) reaction center heterodimer binds P680, the primary electron donor of PSII as well as several subsequent electron acceptors. The protein is Photosystem II protein D1 of Pinus koraiensis (Korean pine).